Consider the following 121-residue polypeptide: Glycine cleavage system H protein (121 aa).

The 81-residue stretch at 22–102 folds into the Lipoyl-binding domain; that stretch reads IAWVGITKYA…DSSVWLFKAE (81 aa). N6-lipoyllysine is present on K63.

Belongs to the GcvH family. The glycine cleavage system is composed of four proteins: P, T, L and H. The cofactor is (R)-lipoate.

In terms of biological role, the glycine cleavage system catalyzes the degradation of glycine. The H protein shuttles the methylamine group of glycine from the P protein to the T protein. The chain is Glycine cleavage system H protein from Tropheryma whipplei (strain TW08/27) (Whipple's bacillus).